Here is a 370-residue protein sequence, read N- to C-terminus: 3-dehydroquinate synthase (370 aa).

NAD(+) is bound by residues 107 to 111, 131 to 132, Lys-144, and Lys-153; these read GVIGD and TS. Positions 186, 249, and 267 each coordinate Zn(2+).

The protein belongs to the sugar phosphate cyclases superfamily. Dehydroquinate synthase family. The cofactor is Co(2+). Zn(2+) is required as a cofactor. It depends on NAD(+) as a cofactor.

The protein resides in the cytoplasm. It carries out the reaction 7-phospho-2-dehydro-3-deoxy-D-arabino-heptonate = 3-dehydroquinate + phosphate. It participates in metabolic intermediate biosynthesis; chorismate biosynthesis; chorismate from D-erythrose 4-phosphate and phosphoenolpyruvate: step 2/7. In terms of biological role, catalyzes the conversion of 3-deoxy-D-arabino-heptulosonate 7-phosphate (DAHP) to dehydroquinate (DHQ). This Roseobacter denitrificans (strain ATCC 33942 / OCh 114) (Erythrobacter sp. (strain OCh 114)) protein is 3-dehydroquinate synthase.